The chain runs to 177 residues: CCHC-type zinc finger nucleic acid binding protein (177 aa).

N-acetylserine is present on Ser-2. A CCHC-type 1 zinc finger spans residues 4–21 (NECFKCGRSGHWARECPT). Lys-8 bears the N6-acetyllysine mark. Arg-25 and Arg-27 each carry omega-N-methylarginine; by PRMT1. The interval 25–38 (RGRGMRSRGRGGFT) is RNA-binding Arg/Gly-rich region (RGG-box). Residues Arg-32 and Arg-34 each carry the omega-N-methylarginine modification. Residue Ser-49 is modified to Phosphoserine. 6 consecutive CCHC-type zinc fingers follow at residues 52–69 (DICYRCGESGHLAKDCDL), 72–89 (DACYNCGRGGHIAKDCKE), 96–113 (QCCYNCGKPGHLARDCDH), 117–134 (QKCYSCGEFGHIQKDCTK), 135–152 (VKCYRCGETGHVAINCSK), and 156–173 (VNCYRCGESGHLARECTI). Ala-73, Arg-79, and Gly-80 each carry omega-N-methylarginine.

In terms of assembly, associates with the 40S ribosomal subunit, the 80S ribosome and with polysomes. Arginine methylation by PRMT1 in the Arg/Gly-rich region impedes RNA binding. Expressed in the liver, kidney, spleen, testis, lung, muscle and adrenal glands.

It is found in the nucleus. The protein localises to the cytoplasm. Its subcellular location is the endoplasmic reticulum. Its function is as follows. Single-stranded DNA-binding protein that preferentially binds to the sterol regulatory element (SRE) sequence 5'-GTGCGGTG-3', and thereby mediates transcriptional repression. Has a role as transactivator of the Myc promoter. Binds single-stranded RNA in a sequence-specific manner. In terms of biological role, binds G-rich elements in target mRNA coding sequences. Prevents G-quadruplex structure formation in vitro, suggesting a role in supporting translation by resolving stable structures on mRNAs. Binds to RNA. This Homo sapiens (Human) protein is CCHC-type zinc finger nucleic acid binding protein.